We begin with the raw amino-acid sequence, 409 residues long: Toluene 1,2-dioxygenase system ferredoxin--NAD(+) reductase component (409 aa).

4–35 (HVAIIGNGVGGFTTAQALRAEGFEGRISLIGD) provides a ligand contact to FAD. 145–173 (RLLIVGGGLIGCEVATTARKLGLSVTILE) serves as a coordination point for NAD(+).

Belongs to the bacterial ring-hydroxylating dioxygenase ferredoxin reductase family. As to quaternary structure, this dioxygenase system consists of four proteins: the two subunits of the hydroxylase component (todC1 and todC2), a ferredoxin (TodB) and a ferredoxin reductase (TodA). The cofactor is FAD.

The enzyme catalyses 2 reduced [2Fe-2S]-[ferredoxin] + NAD(+) + H(+) = 2 oxidized [2Fe-2S]-[ferredoxin] + NADH. The protein operates within xenobiotic degradation; toluene degradation. In terms of biological role, part of the electron transfer component of toluene 1,2-dioxygenase, transfers electrons from ferredoxin (TodB) to NADH. The protein is Toluene 1,2-dioxygenase system ferredoxin--NAD(+) reductase component (todA) of Pseudomonas putida (Arthrobacter siderocapsulatus).